We begin with the raw amino-acid sequence, 295 residues long: Very long chain fatty acid elongase 5 (295 aa).

The next 7 helical transmembrane spans lie at 26–46, 64–84, 112–132, 150–170, 172–192, 207–223, and 227–247; these read WLLLDNYVPTIFFTALYLFIV, ILVVYNLGLTLLSFYMFYELV, VLWWYYFSKLIEFMDTFFFIL, MLNIWWFVMNWVPCGHSFFGA, LNSFIHVLMYSYYGLSAIPAI, LTQFVLTMTQTTCAMIW, and FPMGWLYFQNSYMISLIILFT. Residues 265-295 form a disordered region; sequence YQNGSASAVNGYTNSFSSLEDNVKQRKQRQN. The span at 266 to 284 shows a compositional bias: polar residues; sequence QNGSASAVNGYTNSFSSLE.

It belongs to the ELO family. ELOVL5 subfamily.

It is found in the endoplasmic reticulum membrane. The protein resides in the cell projection. Its subcellular location is the dendrite. It carries out the reaction a very-long-chain acyl-CoA + malonyl-CoA + H(+) = a very-long-chain 3-oxoacyl-CoA + CO2 + CoA. It catalyses the reaction (6Z,9Z,12Z)-octadecatrienoyl-CoA + malonyl-CoA + H(+) = (8Z,11Z,14Z)-3-oxoeicosatrienoyl-CoA + CO2 + CoA. The catalysed reaction is (9Z,12Z,15Z)-octadecatrienoyl-CoA + malonyl-CoA + H(+) = (11Z,14Z,17Z)-3-oxoeicosatrienoyl-CoA + CO2 + CoA. The enzyme catalyses (9Z)-hexadecenoyl-CoA + malonyl-CoA + H(+) = 3-oxo-(11Z)-octadecenoyl-CoA + CO2 + CoA. It carries out the reaction (9Z)-octadecenoyl-CoA + malonyl-CoA + H(+) = 3-oxo-(11Z)-eicosenoyl-CoA + CO2 + CoA. It catalyses the reaction (11Z)-octadecenoyl-CoA + malonyl-CoA + H(+) = 3-oxo-(13Z)-eicosenoyl-CoA + CO2 + CoA. The catalysed reaction is (9Z,12Z)-octadecadienoyl-CoA + malonyl-CoA + H(+) = (11Z,14Z)-3-oxoicosa-11,14-dienoyl-CoA + CO2 + CoA. The enzyme catalyses (6Z,9Z,12Z,15Z)-octadecatetraenoyl-CoA + malonyl-CoA + H(+) = (8Z,11Z,14Z,17Z)-3-oxoicosatetraenoyl-CoA + CO2 + CoA. It carries out the reaction (5Z,8Z,11Z,14Z)-eicosatetraenoyl-CoA + malonyl-CoA + H(+) = (7Z,10Z,13Z,16Z)-3-oxodocosatetraenoyl-CoA + CO2 + CoA. It catalyses the reaction (5Z,8Z,11Z,14Z,17Z)-eicosapentaenoyl-CoA + malonyl-CoA + H(+) = 3-oxo-(7Z,10Z,13Z,16Z,19Z)-docosapentaenoyl-CoA + CO2 + CoA. It functions in the pathway lipid metabolism; polyunsaturated fatty acid biosynthesis. In terms of biological role, catalyzes the first and rate-limiting reaction of the four reactions that constitute the long-chain fatty acids elongation cycle. This endoplasmic reticulum-bound enzymatic process allows the addition of 2 carbons to the chain of long- and very long-chain fatty acids (VLCFAs) per cycle. Condensing enzyme that acts specifically toward polyunsaturated acyl-CoA with the higher activity toward C18:3(n-6) acyl-CoA. May participate in the production of monounsaturated and of polyunsaturated VLCFAs of different chain lengths that are involved in multiple biological processes as precursors of membrane lipids and lipid mediators. In conditions where the essential linoleic and alpha linoleic fatty acids are lacking it is also involved in the synthesis of Mead acid from oleic acid. The protein is Very long chain fatty acid elongase 5 of Xenopus laevis (African clawed frog).